A 253-amino-acid polypeptide reads, in one-letter code: Ubiquinone/menaquinone biosynthesis C-methyltransferase UbiE (253 aa).

S-adenosyl-L-methionine is bound by residues Thr76, Asp97, and 125–126 (NA).

The protein belongs to the class I-like SAM-binding methyltransferase superfamily. MenG/UbiE family.

It catalyses the reaction a 2-demethylmenaquinol + S-adenosyl-L-methionine = a menaquinol + S-adenosyl-L-homocysteine + H(+). The catalysed reaction is a 2-methoxy-6-(all-trans-polyprenyl)benzene-1,4-diol + S-adenosyl-L-methionine = a 5-methoxy-2-methyl-3-(all-trans-polyprenyl)benzene-1,4-diol + S-adenosyl-L-homocysteine + H(+). It participates in quinol/quinone metabolism; menaquinone biosynthesis; menaquinol from 1,4-dihydroxy-2-naphthoate: step 2/2. Its pathway is cofactor biosynthesis; ubiquinone biosynthesis. Functionally, methyltransferase required for the conversion of demethylmenaquinol (DMKH2) to menaquinol (MKH2) and the conversion of 2-polyprenyl-6-methoxy-1,4-benzoquinol (DDMQH2) to 2-polyprenyl-3-methyl-6-methoxy-1,4-benzoquinol (DMQH2). The polypeptide is Ubiquinone/menaquinone biosynthesis C-methyltransferase UbiE (Bradyrhizobium diazoefficiens (strain JCM 10833 / BCRC 13528 / IAM 13628 / NBRC 14792 / USDA 110)).